The primary structure comprises 231 residues: Probable cell wall protein ARB_06477 (231 aa).

The N-terminal stretch at 1-17 (MRSVLYLLFTAVAAVAA) is a signal peptide. Residues 107–206 (TPSFMVDGAT…TGMPTSSGAP (100 aa)) form a disordered region. Low complexity predominate over residues 121-204 (TGPTTSRTSM…SSTGMPTSSG (84 aa)). The GPI-anchor amidated serine moiety is linked to residue serine 203. Residues 204-231 (GAPDPNGAVSLALPGGLLSIVLSLMALL) constitute a propeptide, removed in mature form.

It belongs to the SRP1/TIP1 family. In terms of processing, the GPI-anchor is attached to the protein in the endoplasmic reticulum and serves to target the protein to the cell surface. There, the glucosamine-inositol phospholipid moiety is cleaved off and the GPI-modified mannoprotein is covalently attached via its lipidless GPI glycan remnant to the 1,6-beta-glucan of the outer cell wall layer.

Its subcellular location is the cell membrane. The protein localises to the secreted. It localises to the cell wall. Functionally, probable component of the cell wall. This Arthroderma benhamiae (strain ATCC MYA-4681 / CBS 112371) (Trichophyton mentagrophytes) protein is Probable cell wall protein ARB_06477.